Reading from the N-terminus, the 242-residue chain is tRNA (guanine-N(1)-)-methyltransferase (242 aa).

Residues Gly-108 and 127 to 132 (IGDYVL) contribute to the S-adenosyl-L-methionine site.

It belongs to the RNA methyltransferase TrmD family. As to quaternary structure, homodimer.

It is found in the cytoplasm. The catalysed reaction is guanosine(37) in tRNA + S-adenosyl-L-methionine = N(1)-methylguanosine(37) in tRNA + S-adenosyl-L-homocysteine + H(+). Specifically methylates guanosine-37 in various tRNAs. The protein is tRNA (guanine-N(1)-)-methyltransferase of Lactobacillus acidophilus (strain ATCC 700396 / NCK56 / N2 / NCFM).